Here is a 37-residue protein sequence, read N- to C-terminus: Large ribosomal subunit protein bL36 (37 aa).

This sequence belongs to the bacterial ribosomal protein bL36 family.

This Helicobacter pylori (strain ATCC 700392 / 26695) (Campylobacter pylori) protein is Large ribosomal subunit protein bL36.